A 307-amino-acid polypeptide reads, in one-letter code: Fructose-bisphosphate aldolase (307 aa).

Residue Ser49 coordinates D-glyceraldehyde 3-phosphate. Residue Asp82 is the Proton donor of the active site. Residues His83, Asp104, Glu134, and His180 each contribute to the Zn(2+) site. Residue Gly181 participates in dihydroxyacetone phosphate binding. Residue His210 participates in Zn(2+) binding. Dihydroxyacetone phosphate is bound by residues 211-213 and 253-256; these read GAS and NTDT.

This sequence belongs to the class II fructose-bisphosphate aldolase family. Homodimer. It depends on Zn(2+) as a cofactor.

It catalyses the reaction beta-D-fructose 1,6-bisphosphate = D-glyceraldehyde 3-phosphate + dihydroxyacetone phosphate. It functions in the pathway carbohydrate degradation; glycolysis; D-glyceraldehyde 3-phosphate and glycerone phosphate from D-glucose: step 4/4. Its function is as follows. Catalyzes the aldol condensation of dihydroxyacetone phosphate (DHAP or glycerone-phosphate) with glyceraldehyde 3-phosphate (G3P) to form fructose 1,6-bisphosphate (FBP) in gluconeogenesis and the reverse reaction in glycolysis. The chain is Fructose-bisphosphate aldolase (fba) from Helicobacter pylori (strain J99 / ATCC 700824) (Campylobacter pylori J99).